The following is a 411-amino-acid chain: MATINDNYLKLKAGYLFPEIARRVKTFAEANPDAKIIKLGIGDVTEPLPEACRTAMIKAIEDMGDRGTFKGYGPEQGYEWLREKIATHDFQARNCDVDASEIFVSDGAKCDTGNILDIFGKNNKIAVTDPVYPVYVDTNVMAGHTGEVNDKGEYEGLVYLPINAENNFIAEIPSQKVDIIYLCFPNNPTGATATKDYLKNWVDYAKANGSIIFFDAAYEAFITDSSLPHSIYEIEGARDCAIEFRSFSKNAGFTGTRCALTVVPKTLTAKASDGSDVELWKLWNRRQSTKFNGVSYIVQRGAEAVYSEAGKAQVQALISFYLENAQIICDKLKGAGFEVYGGVNAPYIWLKTPHNLSSWDFFDKLLQTANVVGTPGSGFGAAGEGYFRISAFNSRENVLEAMKRITSQFHL.

Tyr-15 and Gly-42 together coordinate substrate. Residues Tyr-72, 108 to 109 (AK), Tyr-132, Asn-187, Tyr-218, and 246 to 248 (SFS) each bind pyridoxal 5'-phosphate. Residues Lys-109, Tyr-132, and Asn-187 each coordinate substrate. Lys-249 carries the post-translational modification N6-(pyridoxal phosphate)lysine. Positions 257 and 292 each coordinate pyridoxal 5'-phosphate. Asn-292 and Arg-388 together coordinate substrate.

Belongs to the class-I pyridoxal-phosphate-dependent aminotransferase family. LL-diaminopimelate aminotransferase subfamily. Homodimer. The cofactor is pyridoxal 5'-phosphate.

It catalyses the reaction (2S,6S)-2,6-diaminopimelate + 2-oxoglutarate = (S)-2,3,4,5-tetrahydrodipicolinate + L-glutamate + H2O + H(+). The protein operates within amino-acid biosynthesis; L-lysine biosynthesis via DAP pathway; LL-2,6-diaminopimelate from (S)-tetrahydrodipicolinate (aminotransferase route): step 1/1. In terms of biological role, involved in the synthesis of meso-diaminopimelate (m-DAP or DL-DAP), required for both lysine and peptidoglycan biosynthesis. Catalyzes the direct conversion of tetrahydrodipicolinate to LL-diaminopimelate. This is LL-diaminopimelate aminotransferase from Rippkaea orientalis (strain PCC 8801 / RF-1) (Cyanothece sp. (strain PCC 8801)).